We begin with the raw amino-acid sequence, 689 residues long: Methionine--tRNA ligase (689 aa).

The short motif at 15–25 (PYANGPIHLGH) is the 'HIGH' region element. Residues cysteine 146, cysteine 149, cysteine 159, and cysteine 162 each contribute to the Zn(2+) site. The short motif at 332–336 (KMSKS) is the 'KMSKS' region element. Lysine 335 contributes to the ATP binding site. A tRNA-binding domain is found at 588–689 (DFAKIDLRIA…EGAQPGMRVK (102 aa)).

It belongs to the class-I aminoacyl-tRNA synthetase family. MetG type 1 subfamily. Homodimer. The cofactor is Zn(2+).

It is found in the cytoplasm. It catalyses the reaction tRNA(Met) + L-methionine + ATP = L-methionyl-tRNA(Met) + AMP + diphosphate. Is required not only for elongation of protein synthesis but also for the initiation of all mRNA translation through initiator tRNA(fMet) aminoacylation. This chain is Methionine--tRNA ligase, found in Shewanella baltica (strain OS223).